Consider the following 135-residue polypeptide: Ribosome-binding factor A (135 aa).

Belongs to the RbfA family. As to quaternary structure, monomer. Binds 30S ribosomal subunits, but not 50S ribosomal subunits or 70S ribosomes.

The protein resides in the cytoplasm. Its function is as follows. One of several proteins that assist in the late maturation steps of the functional core of the 30S ribosomal subunit. Associates with free 30S ribosomal subunits (but not with 30S subunits that are part of 70S ribosomes or polysomes). Required for efficient processing of 16S rRNA. May interact with the 5'-terminal helix region of 16S rRNA. The protein is Ribosome-binding factor A of Aliivibrio fischeri (strain MJ11) (Vibrio fischeri).